A 173-amino-acid polypeptide reads, in one-letter code: Protein PLASTID REDOX INSENSITIVE 2, chloroplastic (173 aa).

Residues 1–55 (MATRAWVAAAVALNPQLLPLRSCSPTKSVSPAQRSASMGLRLRSGRPCLGKFVCR) constitute a chloroplast transit peptide.

It localises to the plastid. Its subcellular location is the chloroplast stroma. It is found in the chloroplast nucleoid. Functionally, required for the activity of the plastid-encoded RNA polymerase (PEP) and full expression of genes transcribed by PEP. The chain is Protein PLASTID REDOX INSENSITIVE 2, chloroplastic from Zea mays (Maize).